The following is a 183-amino-acid chain: Thymidine kinase (183 aa).

Residue 11 to 18 (GPMFSGKT) participates in ATP binding. The active-site Proton acceptor is the Glu-89. Phe-119 lines the substrate pocket. The Zn(2+) site is built by Cys-144 and Cys-147. 163–167 (VMDIG) is a substrate binding site. 2 residues coordinate Zn(2+): Cys-176 and Cys-179.

The protein belongs to the thymidine kinase family.

The enzyme catalyses thymidine + ATP = dTMP + ADP + H(+). The chain is Thymidine kinase (TK) from Vertebrata (FPV).